A 25-amino-acid chain; its full sequence is Bifunctional chitinase/lysozyme (25 aa).

Belongs to the glycosyl hydrolase 19 family. Chitinase class I subfamily. As to quaternary structure, monomer.

Its subcellular location is the secreted. It is found in the extracellular space. It catalyses the reaction Random endo-hydrolysis of N-acetyl-beta-D-glucosaminide (1-&gt;4)-beta-linkages in chitin and chitodextrins.. The catalysed reaction is Hydrolysis of (1-&gt;4)-beta-linkages between N-acetylmuramic acid and N-acetyl-D-glucosamine residues in a peptidoglycan and between N-acetyl-D-glucosamine residues in chitodextrins.. Functionally, bifunctional enzyme with lysozyme/chitinase activity. The protein is Bifunctional chitinase/lysozyme of Carica papaya (Papaya).